The chain runs to 184 residues: MVRKLKFHEQKLLKQVDFLNWEVTDHNLHELRVLRRYRLQRREEYTRYNQLSRAVRELARRLRDLPERDPFRVRASAALLDKLYAMGLVPTRGSLELCDSVSASSFCRRRLPTLLLKLRMAQHLQAAVAFVEQGHVRVGPDVVTDPAFLVTRSMEDFVTWVDSSKIKRHVLEYNEERDDFDLDA.

One can recognise an S4 RNA-binding domain in the interval 109–175 (RRLPTLLLKL…IKRHVLEYNE (67 aa)).

The protein belongs to the universal ribosomal protein uS4 family. As to quaternary structure, part of the small subunit (SSU) processome, composed of more than 70 proteins and the RNA chaperone small nucleolar RNA (snoRNA) U3. Component of a heterotrimeric complex containing IMP3, IMP4 and MPHOSPH10. Interacts with MPHOSPH10.

It is found in the nucleus. The protein localises to the nucleolus. Functionally, component of the 60-80S U3 small nucleolar ribonucleoprotein (U3 snoRNP). Required for the early cleavages during pre-18S ribosomal RNA processing. Part of the small subunit (SSU) processome, first precursor of the small eukaryotic ribosomal subunit. During the assembly of the SSU processome in the nucleolus, many ribosome biogenesis factors, an RNA chaperone and ribosomal proteins associate with the nascent pre-rRNA and work in concert to generate RNA folding, modifications, rearrangements and cleavage as well as targeted degradation of pre-ribosomal RNA by the RNA exosome. The protein is U3 small nucleolar ribonucleoprotein protein IMP3 (Imp3) of Mus musculus (Mouse).